Here is a 351-residue protein sequence, read N- to C-terminus: Flagellar P-ring protein (351 aa).

Residues 1–20 (MKKILFLFTASLLLHVTLQA) form the signal peptide.

The protein belongs to the FlgI family. The basal body constitutes a major portion of the flagellar organelle and consists of four rings (L,P,S, and M) mounted on a central rod.

It is found in the periplasm. Its subcellular location is the bacterial flagellum basal body. Its function is as follows. Assembles around the rod to form the L-ring and probably protects the motor/basal body from shearing forces during rotation. The chain is Flagellar P-ring protein from Sulfurimonas denitrificans (strain ATCC 33889 / DSM 1251) (Thiomicrospira denitrificans (strain ATCC 33889 / DSM 1251)).